Reading from the N-terminus, the 117-residue chain is Ribosome-binding factor A (117 aa).

It belongs to the RbfA family. Monomer. Binds 30S ribosomal subunits, but not 50S ribosomal subunits or 70S ribosomes.

The protein resides in the cytoplasm. Its function is as follows. One of several proteins that assist in the late maturation steps of the functional core of the 30S ribosomal subunit. Associates with free 30S ribosomal subunits (but not with 30S subunits that are part of 70S ribosomes or polysomes). Required for efficient processing of 16S rRNA. May interact with the 5'-terminal helix region of 16S rRNA. This Streptococcus thermophilus (strain CNRZ 1066) protein is Ribosome-binding factor A.